The following is a 177-amino-acid chain: Large ribosomal subunit protein bL19 (177 aa).

This sequence belongs to the bacterial ribosomal protein bL19 family.

Its function is as follows. This protein is located at the 30S-50S ribosomal subunit interface and may play a role in the structure and function of the aminoacyl-tRNA binding site. The sequence is that of Large ribosomal subunit protein bL19 from Rhizobium meliloti (strain 1021) (Ensifer meliloti).